The chain runs to 171 residues: Putative adenylate kinase (171 aa).

Residues Gly9, Gly11, Lys12, Thr13, and Thr14 each coordinate ATP. The NMP stretch occupies residues Ser28–Ala51. The interval Gly99–Glu109 is LID. Arg100 serves as a coordination point for ATP.

It belongs to the adenylate kinase family. AK6 subfamily. In terms of assembly, interacts with uS11. Not a structural component of 40S pre-ribosomes, but transiently interacts with them by binding to uS11.

The catalysed reaction is AMP + ATP = 2 ADP. The enzyme catalyses ATP + H2O = ADP + phosphate + H(+). In terms of biological role, broad-specificity nucleoside monophosphate (NMP) kinase that catalyzes the reversible transfer of the terminal phosphate group between nucleoside triphosphates and monophosphates. Also has ATPase activity. Involved in the late maturation steps of the 30S ribosomal particles, specifically 16S rRNA maturation. While NMP activity is not required for ribosome maturation, ATPase activity is. Associates transiently with small ribosomal subunit protein uS11. ATP hydrolysis breaks the interaction with uS11. May temporarily remove uS11 from the ribosome to enable a conformational change of the ribosomal RNA that is needed for the final maturation step of the small ribosomal subunit. The chain is Putative adenylate kinase from Methanothermobacter thermautotrophicus (strain ATCC 29096 / DSM 1053 / JCM 10044 / NBRC 100330 / Delta H) (Methanobacterium thermoautotrophicum).